We begin with the raw amino-acid sequence, 49 residues long: Defensin Tm-AMP-D1.2 (49 aa).

Cystine bridges form between cysteine 3-cysteine 49, cysteine 14-cysteine 34, cysteine 20-cysteine 43, and cysteine 24-cysteine 45.

Plant defense peptide. The polypeptide is Defensin Tm-AMP-D1.2 (Triticum monococcum (Einkorn wheat)).